The following is a 117-amino-acid chain: Immunoglobulin heavy variable 4-4 (117 aa).

The first 19 residues, 1-19 (MKHLWFFLLLVAAPRWVLS), serve as a signal peptide directing secretion. The segment at 20–44 (QVQLQESGPGLVKPSGTLSLTCAVS) is framework-1. Positions 20 to 117 (QVQLQESGPG…ADTAVYYCAR (98 aa)) constitute an Ig-like domain. A disulfide bridge links Cys-41 with Cys-115. Residues 45-53 (GGSISSSNW) are complementarity-determining-1. A framework-2 region spans residues 54-70 (WSWVRQPPGKGLEWIGE). Residues 71–77 (IYHSGST) form a complementarity-determining-2 region. The framework-3 stretch occupies residues 78–115 (NYNPSLKSRVTISVDKSKNQFSLKLSSVTAADTAVYYC). The interval 116–117 (AR) is complementarity-determining-3.

In terms of assembly, immunoglobulins are composed of two identical heavy chains and two identical light chains; disulfide-linked.

The protein localises to the secreted. The protein resides in the cell membrane. Its function is as follows. V region of the variable domain of immunoglobulin heavy chains that participates in the antigen recognition. Immunoglobulins, also known as antibodies, are membrane-bound or secreted glycoproteins produced by B lymphocytes. In the recognition phase of humoral immunity, the membrane-bound immunoglobulins serve as receptors which, upon binding of a specific antigen, trigger the clonal expansion and differentiation of B lymphocytes into immunoglobulins-secreting plasma cells. Secreted immunoglobulins mediate the effector phase of humoral immunity, which results in the elimination of bound antigens. The antigen binding site is formed by the variable domain of one heavy chain, together with that of its associated light chain. Thus, each immunoglobulin has two antigen binding sites with remarkable affinity for a particular antigen. The variable domains are assembled by a process called V-(D)-J rearrangement and can then be subjected to somatic hypermutations which, after exposure to antigen and selection, allow affinity maturation for a particular antigen. The polypeptide is Immunoglobulin heavy variable 4-4 (Homo sapiens (Human)).